The chain runs to 657 residues: MGILDTIRNPQDLNDLSEEQLEQLASEIREFLITNVSQTGGHLGPNLGVVELTLAVHRIFDSPRDSIVFDTGHQSYVHKLLTGRQDFSTLRQQGGLSGYPSRAESEHDIVESSHASSSLSWADGISRARQLTGEGDRHVVAVVGDGALTGGMAWEAINNIAADKKRRVVIVVNDNGRSYAPTVGGFADYLASLRPTIDSFRAAPAYEVALDWWKKKLQNGGPAGQFTYKSLHAMKKGVKDWWAPQGMFEDLGMKYIGPVDGHNLQALEHALATARNYHGPVIVHAMTEKGHGYAPARAHEADQFHAVGIIDPETGEPTGTAGAKSWTSVFADEIAAIADERKDVVGITGAMLIPVGLHKFAAKHPDRVIDVGIAEQHALTSAAGMAFGGLHPVVAVYATFLNRAFDQLLMDVALHKAGVTIVLDRAGVTGPDGASHHGMWDMSMVQIVPGLHLAAPRDASRLREELREAVAINDAPTVVRFSKGSVGAEIEALERLSDGVDVLARRPAGSTANDVLIVSVGAMSELALDVANRLGAQGISTTVVDPRWVLPVRRSIVALASHHRLVICIEDGVRAGGVGSRIRQEMRAAGVDTALNEVGLPVEFLDHGTRSEVLERVGLTAQQITHDVVAQVLGTKVPFARPLPGQQHPTTGSLPIL.

Thiamine diphosphate contacts are provided by residues histidine 73 and 113 to 115 (SHA). Aspartate 145 is a Mg(2+) binding site. Thiamine diphosphate-binding positions include 146–147 (GA), asparagine 175, tyrosine 293, and glutamate 375. Asparagine 175 serves as a coordination point for Mg(2+).

It belongs to the transketolase family. DXPS subfamily. As to quaternary structure, homodimer. Mg(2+) is required as a cofactor. Requires thiamine diphosphate as cofactor.

It carries out the reaction D-glyceraldehyde 3-phosphate + pyruvate + H(+) = 1-deoxy-D-xylulose 5-phosphate + CO2. Its pathway is metabolic intermediate biosynthesis; 1-deoxy-D-xylulose 5-phosphate biosynthesis; 1-deoxy-D-xylulose 5-phosphate from D-glyceraldehyde 3-phosphate and pyruvate: step 1/1. Functionally, catalyzes the acyloin condensation reaction between C atoms 2 and 3 of pyruvate and glyceraldehyde 3-phosphate to yield 1-deoxy-D-xylulose-5-phosphate (DXP). The protein is 1-deoxy-D-xylulose-5-phosphate synthase of Pseudarthrobacter chlorophenolicus (strain ATCC 700700 / DSM 12829 / CIP 107037 / JCM 12360 / KCTC 9906 / NCIMB 13794 / A6) (Arthrobacter chlorophenolicus).